The following is a 342-amino-acid chain: NADPH-dependent methylglyoxal reductase GRE2 (342 aa).

Residues 7–12 (GANGFI), Arg-32, Lys-36, 57–58 (DI), Tyr-165, Lys-169, Val-199, and Ser-216 contribute to the NADP(+) site. The Proton donor role is filled by Lys-169. The residue at position 333 (Ser-333) is a Phosphoserine.

The protein belongs to the NAD(P)-dependent epimerase/dehydratase family. Dihydroflavonol-4-reductase subfamily. Monomer. The N-terminus is blocked.

It is found in the cytoplasm. The protein localises to the nucleus. It catalyses the reaction (S)-lactaldehyde + NADP(+) = methylglyoxal + NADPH + H(+). The catalysed reaction is 3-methylbutanol + NADP(+) = 3-methylbutanal + NADPH + H(+). The enzyme catalyses 2,5-hexanedione + 2 NADPH + 2 H(+) = (2S,5S)-hexanediol + 2 NADP(+). It carries out the reaction (S)-3-chloro-1-phenyl-1-propanol + NADP(+) = 3-chloro-1-phenyl-1-propanone + NADPH + H(+). With respect to regulation, activated by glutathione. Catalyzes the irreversible reduction of the cytotoxic compound methylglyoxal (MG, 2-oxopropanal) to (S)-lactaldehyde as an alternative to detoxification of MG by glyoxalase I GLO1. MG is synthesized via a bypath of glycolysis from dihydroxyacetone phosphate and is believed to play a role in cell cycle regulation and stress adaptation. Also catalyzes the reduction of 3-methylbutanal to 3-methylbutanol. Acts as a suppressor of 3-methylbutanol-induced filamentation by modulating the levels of 3-methylbutanal, the signal to which cells respond by filamentation. Also involved in ergosterol metabolism. The chain is NADPH-dependent methylglyoxal reductase GRE2 (GRE2) from Saccharomyces cerevisiae (strain ATCC 204508 / S288c) (Baker's yeast).